A 987-amino-acid polypeptide reads, in one-letter code: VPS35 endosomal protein sorting factor-like (987 aa).

Residues 1–23 (MAERQSASSPTPSSPPQQQQQTP) are compositionally biased toward low complexity. A disordered region spans residues 1–115 (MAERQSASSP…DPLNNPLEKK (115 aa)). Residues 43 to 63 (NGREVERHPLNSITKTEDTGK) show a composition bias toward basic and acidic residues. The span at 66–111 (QSSLSSNASSLQSAAAAASSSTATTDIDPLNNNNNNNTDIDPLNNP) shows a compositional bias: low complexity.

This sequence belongs to the VPS35L family. Component of the heterotrimeric retriever complex.

It is found in the endosome. Functionally, acts as a component of the retriever complex. The retriever complex is a heterotrimeric complex related to retromer cargo-selective complex (CSC) and essential for retromer-independent retrieval and recycling of numerous cargos. In Dictyostelium discoideum (Social amoeba), this protein is VPS35 endosomal protein sorting factor-like.